The primary structure comprises 336 residues: HTH-type transcriptional regulator CdhR (336 aa).

The 99-residue stretch at 213-311 folds into the HTH araC/xylS-type domain; the sequence is VQVIGEMERH…AASPSQDRAV (99 aa). DNA-binding regions (H-T-H motif) lie at residues 230–251 and 278–301; these read LELA…RVHL and VLQV…RARF. The segment at 305–336 is disordered; it reads PSQDRAVLPLKAPAATPPGAPAGHRTPRAERG.

Its function is as follows. Induces the transcription of the PA5384-PA5388 operon in response to carnitine. This operon is involved in the degradation of L-carnitine, and allows P.aeruginosa to grow on L-carnitine as the sole source of carbon and nitrogen. This Pseudomonas aeruginosa (strain ATCC 15692 / DSM 22644 / CIP 104116 / JCM 14847 / LMG 12228 / 1C / PRS 101 / PAO1) protein is HTH-type transcriptional regulator CdhR (cdhR).